The sequence spans 178 residues: Conodipine-P1 (178 aa).

The N-terminal stretch at 1–24 (MKLLAPVLWAMAALGVTWLVAVDS) is a signal peptide. 3 positions are modified to 4-hydroxyproline; partial: P38, P42, and P49. Residue H54 is part of the active site. The propeptide at 98–130 (KREVTSHRATSIAHSRLWKTALDQKSFLNRKAR) is interchain peptide. At Q131 the chain carries Pyrrolidone carboxylic acid. 4-hydroxyproline; partial is present on P137.

Belongs to the phospholipase A2 family. Group IX subfamily. In terms of assembly, heterodimer of an alpha and a beta chain; probably disulfide-linked. It depends on Ca(2+) as a cofactor. As to expression, expressed by the venom duct.

The protein resides in the secreted. It catalyses the reaction a 1,2-diacyl-sn-glycero-3-phosphocholine + H2O = a 1-acyl-sn-glycero-3-phosphocholine + a fatty acid + H(+). In terms of biological role, catalyzes the calcium-dependent hydrolysis of the 2-acyl groups in 3-sn-phosphoglycerides. In Conus purpurascens (Purple cone), this protein is Conodipine-P1.